A 376-amino-acid chain; its full sequence is SKMDGQVIHCKAAVAWEAKKPLSLEEIEVAPPKAHEVRMKVLATAVCHTDAYTLSGVDPEGSFPVVLGHEGAGIVESVGEGVTKFKPGDSVIPLYIPQCGECKFCLNPKTNLCQKIRVTQGKGMMPDGTSRLTCRGKSLYHFMGASTFSEYAVVADISLCRVAPEAPPDRVCLLGCGVSTGYGAPLNTAKVEPGSTCAIFGLGAVGLAAIMGCRVAGASRIIAIDRNPDKFEKARIFGATDCVVPDASDKPISQVLGEMTDGGLDYTFECVGNVGIMRAALESCHKGWGVSVILGVAGGGQEISTRPFQLVTGRTWKGAAFGGWKSVESVPKLVDDYMAGKIMVDEFVSHSLPFDSINEAFDLMHAGKSIRTVLQL.

Ser1 carries the post-translational modification N-acetylserine. Zn(2+)-binding residues include Cys47, His69, Cys99, Cys102, Cys105, Cys113, and Cys176.

It belongs to the zinc-containing alcohol dehydrogenase family. Class-III subfamily. As to quaternary structure, homodimer. The cofactor is Zn(2+). Liver and gut.

It is found in the cytoplasm. The catalysed reaction is a primary alcohol + NAD(+) = an aldehyde + NADH + H(+). It catalyses the reaction a secondary alcohol + NAD(+) = a ketone + NADH + H(+). The enzyme catalyses S-(hydroxymethyl)glutathione + NADP(+) = S-formylglutathione + NADPH + H(+). It carries out the reaction S-(hydroxymethyl)glutathione + NAD(+) = S-formylglutathione + NADH + H(+). The catalysed reaction is S-nitrosoglutathione + NADH + H(+) = S-(hydroxysulfenamide)glutathione + NAD(+). Class-III ADH is remarkably ineffective in oxidizing ethanol, but it readily catalyzes the oxidation of long-chain primary alcohols and the oxidation of S-(hydroxymethyl) glutathione. Also acts as a S-nitroso-glutathione reductase by catalyzing the NADH-dependent reduction of S-nitrosoglutathione, thereby regulating protein S-nitrosylation. The chain is Alcohol dehydrogenase class-3 from Myxine glutinosa (Atlantic hagfish).